The primary structure comprises 394 residues: Elongation factor Tu (394 aa).

Residues 10–204 (KPHVNVGTIG…AMDDYIPAPE (195 aa)) enclose the tr-type G domain. Residues 19-26 (GHVDHGKT) are G1. 19–26 (GHVDHGKT) serves as a coordination point for GTP. Threonine 26 contacts Mg(2+). Residues 60–64 (GITIN) are G2. Residues 81–84 (DCPG) are G3. Residues 81–85 (DCPGH) and 136–139 (NKCD) contribute to the GTP site. Residues 136–139 (NKCD) are G4. The segment at 174–176 (SAL) is G5.

This sequence belongs to the TRAFAC class translation factor GTPase superfamily. Classic translation factor GTPase family. EF-Tu/EF-1A subfamily. Monomer.

It localises to the cytoplasm. The catalysed reaction is GTP + H2O = GDP + phosphate + H(+). Its function is as follows. GTP hydrolase that promotes the GTP-dependent binding of aminoacyl-tRNA to the A-site of ribosomes during protein biosynthesis. The chain is Elongation factor Tu from Francisella tularensis subsp. holarctica (strain FTNF002-00 / FTA).